Here is a 265-residue protein sequence, read N- to C-terminus: 3-methyl-2-oxobutanoate hydroxymethyltransferase (265 aa).

Mg(2+) is bound by residues aspartate 41 and aspartate 80. 3-methyl-2-oxobutanoate-binding positions include 41-42 (DS), aspartate 80, and lysine 109. Mg(2+) is bound at residue glutamate 111. Glutamate 178 serves as the catalytic Proton acceptor.

It belongs to the PanB family. In terms of assembly, homodecamer; pentamer of dimers. Mg(2+) is required as a cofactor.

It localises to the cytoplasm. It catalyses the reaction 3-methyl-2-oxobutanoate + (6R)-5,10-methylene-5,6,7,8-tetrahydrofolate + H2O = 2-dehydropantoate + (6S)-5,6,7,8-tetrahydrofolate. Its pathway is cofactor biosynthesis; (R)-pantothenate biosynthesis; (R)-pantoate from 3-methyl-2-oxobutanoate: step 1/2. In terms of biological role, catalyzes the reversible reaction in which hydroxymethyl group from 5,10-methylenetetrahydrofolate is transferred onto alpha-ketoisovalerate to form ketopantoate. This chain is 3-methyl-2-oxobutanoate hydroxymethyltransferase, found in Thermosipho africanus (strain TCF52B).